The primary structure comprises 144 residues: Eukaryotic translation initiation factor 1A (144 aa).

The span at 1-15 (MPKNKGKGGKNRKRG) shows a compositional bias: basic residues. Disordered regions lie at residues 1 to 25 (MPKNKGKGGKNRKRGKNEADDDKRE) and 120 to 144 (DVDGPEEGEGDSDYIQFEDEDIDKI). A compositionally biased stretch (basic and acidic residues) spans 16 to 25 (KNEADDDKRE). The 75-residue stretch at 22-96 (DKRELVFKED…DKADVILKYM (75 aa)) folds into the S1-like domain.

The protein belongs to the eIF-1A family.

In terms of biological role, seems to be required for maximal rate of protein biosynthesis. Enhances ribosome dissociation into subunits and stabilizes the binding of the initiator Met-tRNA(I) to 40 S ribosomal subunits. The polypeptide is Eukaryotic translation initiation factor 1A (Triticum aestivum (Wheat)).